The following is a 324-amino-acid chain: Polyprenol dehydrogenase (324 aa).

Tyr-206 (proton acceptor) is an active-site residue. Tyr-206, Lys-210, and Thr-243 together coordinate NAD(+).

Belongs to the short-chain dehydrogenases/reductases (SDR) family.

The protein resides in the lipid droplet. It carries out the reaction a di-trans,poly-cis-polyprenol + NAD(+) = a di-trans,poly-cis-polyprenal + NADH + H(+). The catalysed reaction is a di-trans,poly-cis-polyprenol + NADP(+) = a di-trans,poly-cis-polyprenal + NADPH + H(+). The enzyme catalyses a di-trans,poly-cis-dolichol + NADP(+) = a di-trans,poly-cis-dolichal + NADPH + H(+). It catalyses the reaction a di-trans,poly-cis-dolichol + NAD(+) = a di-trans,poly-cis-dolichal + NADH + H(+). Its pathway is protein modification; protein glycosylation. In terms of biological role, oxidoreductase that plays a key role in early steps of protein N-linked glycosylation by mediating two non-consecutive steps in dolichol biosynthesis. Acts both as a NAD(+)-dependent dehydrogenase and as a NADPH-dependent reductase during the conversion of polyprenol into dolichol. First catalyzes the NAD(+)-dependent dehydrogenation of polyprenol into polyprenal; polyprenal is then reduced into dolichal by srd5a3. It then catalyzes the NADPH-dependent reduction of dolichal into dolichol. The protein is Polyprenol dehydrogenase of Danio rerio (Zebrafish).